The chain runs to 415 residues: Diaminopimelate decarboxylase (415 aa).

K60 is modified (N6-(pyridoxal phosphate)lysine). Residues G239 and E273–R276 contribute to the pyridoxal 5'-phosphate site. 3 residues coordinate substrate: R276, R312, and Y316. The active-site Proton donor is the C342. The substrate site is built by E343 and Y370. Y370 is a pyridoxal 5'-phosphate binding site.

Belongs to the Orn/Lys/Arg decarboxylase class-II family. LysA subfamily. Homodimer. Requires pyridoxal 5'-phosphate as cofactor.

It carries out the reaction meso-2,6-diaminopimelate + H(+) = L-lysine + CO2. The protein operates within amino-acid biosynthesis; L-lysine biosynthesis via DAP pathway; L-lysine from DL-2,6-diaminopimelate: step 1/1. Functionally, specifically catalyzes the decarboxylation of meso-diaminopimelate (meso-DAP) to L-lysine. The polypeptide is Diaminopimelate decarboxylase (Pseudomonas aeruginosa (strain ATCC 15692 / DSM 22644 / CIP 104116 / JCM 14847 / LMG 12228 / 1C / PRS 101 / PAO1)).